Reading from the N-terminus, the 645-residue chain is Protein disulfide-isomerase A4 (645 aa).

A signal peptide spans 1 to 20 (MRPRKAFLLLLLLGLVQLLA). Thioredoxin domains are found at residues 21–169 (VAGA…EVSQ) and 158–301 (EEIV…EFLK). Residues 24–58 (AEGPDEDSSNRENAIEDEEEEEEEDDDEEEDDLEV) form a disordered region. Positions 38–58 (IEDEEEEEEEDDDEEEDDLEV) are enriched in acidic residues. The CXXC motif lies at 91 to 94 (CGHC). Disulfide bonds link Cys91-Cys94 and Cys206-Cys209. Lys366 bears the N6-acetyllysine mark. Residues 505-636 (FKKGKLKPVI…LSKFIEEHAT (132 aa)) form the Thioredoxin 3 domain. The CXXC signature appears at 555 to 558 (CGHC). A disulfide bond links Cys555 and Cys558. The short motif at 642–645 (KEEL) is the Prevents secretion from ER element.

Belongs to the protein disulfide isomerase family. Part of a large chaperone multiprotein complex comprising DNAJB11, HSP90B1, HSPA5, HYOU, PDIA2, PDIA4, PDIA6, PPIB, SDF2L1, UGGT1 and very small amounts of ERP29, but not, or at very low levels, CALR nor CANX. Component of a complex containing at least CRELD2, MANF, MATN3 and PDIA4. As to quaternary structure, (Microbial infection) Interacts with Human astrovirus-1 and Human astrovirus-8 spike protein VP25; this interaction seems to facilitate the uncoating during virus entry into the cell. Does not interact with Human astrovirus-2 spike protein VP25.

It is found in the endoplasmic reticulum lumen. It localises to the melanosome. It carries out the reaction Catalyzes the rearrangement of -S-S- bonds in proteins.. The protein is Protein disulfide-isomerase A4 (PDIA4) of Homo sapiens (Human).